We begin with the raw amino-acid sequence, 815 residues long: Calpain-3 (815 aa).

Residues 7 to 36 are disordered; the sequence is ASVAPRTAAEPRSPGPVPHPAQSKATEAGG. One can recognise a Calpain catalytic domain in the interval 74–417; that stretch reads LYVDPEFPPD…FTKLEICNLT (344 aa). Residues Cys129, His334, and Asn358 contribute to the active site. A domain III region spans residues 418–586; the sequence is ADALQSDKLQ…KRNLSEEVEN (169 aa). The tract at residues 587-649 is linker; the sequence is TISVDRPVPI…QESEEQQQFR (63 aa). The segment at 605–646 is disordered; the sequence is SNKELGVDQESEEGKGKTSPDKQEQSPQPQPGSSDQESEEQQ. Over residues 616–628 the composition is skewed to basic and acidic residues; sequence EEGKGKTSPDKQE. Low complexity predominate over residues 629–639; that stretch reads QSPQPQPGSSD. 4 EF-hand domains span residues 643–677, 686–719, 716–751, and 781–815; these read EEQQQFRNIFKQIAGDDMEICADELKKVLNTVVNK, FTLESCRSMIALMDTDGSGKLNLQEFHHLWNKIK, NKIKAWQKIFKHYDTDQSGTINSYEMRNAVNDAGFH, and VRLEGMFRAFHAFDKDGDGIIKLNVLEWLQLTMYA. Residues 650 to 815 form a domain IV region; that stretch reads NIFKQIAGDD…LEWLQLTMYA (166 aa). Ala656, Asp659, Glu661, Glu666, Asp699, Asp701, Ser703, Lys705, Glu710, Asp729, Asp731, Ser733, Thr735, Glu740, Asp794, Asp796, Asp798, and Ile800 together coordinate Ca(2+).

It belongs to the peptidase C2 family. In terms of assembly, homodimer; via EF-hand domain 4. Interacts with TTN/titin. Interacts with CMYA5; this interaction, which results in CMYA5 proteolysis, may protect CAPN3 from autolysis. Interacts with SIMC1. Interacts with UTP25; the interaction is required for CAPN3 translocation to the nucleolus.

The protein localises to the cytoplasm. It is found in the nucleus. It localises to the nucleolus. It carries out the reaction Broad endopeptidase activity.. Its activity is regulated as follows. Activated by micromolar concentrations of calcium and inhibited by calpastatin. Calcium-regulated non-lysosomal thiol-protease. Proteolytically cleaves CTBP1. Mediates, with UTP25, the proteasome-independent degradation of p53/TP53. This Macaca fascicularis (Crab-eating macaque) protein is Calpain-3 (CAPN3).